The primary structure comprises 369 residues: Deoxyhypusine synthase (369 aa).

Residues 105-109 (SNLIS), 131-133 (TAG), E137, and D238 each bind NAD(+). Spermidine is bound at residue 136 to 137 (EE). D243 lines the spermidine pocket. Residue G283 participates in NAD(+) binding. H288 contributes to the spermidine binding site. 308–309 (TA) lines the NAD(+) pocket. Spermidine is bound by residues 314 to 316 (GSD) and 323 to 329 (EAVSWGK). The active-site Nucleophile is K329. Residue 342–343 (DA) coordinates NAD(+).

Belongs to the deoxyhypusine synthase family. NAD(+) serves as cofactor.

It carries out the reaction [eIF5A protein]-L-lysine + spermidine = [eIF5A protein]-deoxyhypusine + propane-1,3-diamine. It functions in the pathway protein modification; eIF5A hypusination. Its function is as follows. Catalyzes the NAD-dependent oxidative cleavage of spermidine and the subsequent transfer of the butylamine moiety of spermidine to the epsilon-amino group of a critical lysine residue of the eIF-5A precursor protein to form the intermediate deoxyhypusine residue. This is the first step of the post-translational modification of that lysine into an unusual amino acid residue named hypusine. Hypusination is unique to mature eIF-5A factor and is essential for its function. The polypeptide is Deoxyhypusine synthase (Dhps) (Mus musculus (Mouse)).